We begin with the raw amino-acid sequence, 564 residues long: Dihydroxy-acid dehydratase (564 aa).

D80 contributes to the Mg(2+) binding site. C121 is a binding site for [2Fe-2S] cluster. Mg(2+)-binding residues include D122 and K123. An N6-carboxylysine modification is found at K123. C194 contributes to the [2Fe-2S] cluster binding site. E447 is a binding site for Mg(2+). Catalysis depends on S473, which acts as the Proton acceptor.

Belongs to the IlvD/Edd family. As to quaternary structure, homodimer. The cofactor is [2Fe-2S] cluster. It depends on Mg(2+) as a cofactor.

The enzyme catalyses (2R)-2,3-dihydroxy-3-methylbutanoate = 3-methyl-2-oxobutanoate + H2O. It catalyses the reaction (2R,3R)-2,3-dihydroxy-3-methylpentanoate = (S)-3-methyl-2-oxopentanoate + H2O. The protein operates within amino-acid biosynthesis; L-isoleucine biosynthesis; L-isoleucine from 2-oxobutanoate: step 3/4. Its pathway is amino-acid biosynthesis; L-valine biosynthesis; L-valine from pyruvate: step 3/4. Its function is as follows. Functions in the biosynthesis of branched-chain amino acids. Catalyzes the dehydration of (2R,3R)-2,3-dihydroxy-3-methylpentanoate (2,3-dihydroxy-3-methylvalerate) into 2-oxo-3-methylpentanoate (2-oxo-3-methylvalerate) and of (2R)-2,3-dihydroxy-3-methylbutanoate (2,3-dihydroxyisovalerate) into 2-oxo-3-methylbutanoate (2-oxoisovalerate), the penultimate precursor to L-isoleucine and L-valine, respectively. The sequence is that of Dihydroxy-acid dehydratase from Listeria monocytogenes serotype 4a (strain HCC23).